Reading from the N-terminus, the 336-residue chain is Ferrochelatase (336 aa).

Fe cation is bound by residues histidine 206 and glutamate 287.

This sequence belongs to the ferrochelatase family.

It is found in the cytoplasm. It carries out the reaction heme b + 2 H(+) = protoporphyrin IX + Fe(2+). The protein operates within porphyrin-containing compound metabolism; protoheme biosynthesis; protoheme from protoporphyrin-IX: step 1/1. Its function is as follows. Catalyzes the ferrous insertion into protoporphyrin IX. The polypeptide is Ferrochelatase (Neisseria meningitidis serogroup B (strain ATCC BAA-335 / MC58)).